A 178-amino-acid polypeptide reads, in one-letter code: Ribosomal RNA small subunit methyltransferase G (178 aa).

Residues Gly54, Leu59, 105–106, and Arg120 contribute to the S-adenosyl-L-methionine site; that span reads LE.

Belongs to the methyltransferase superfamily. RNA methyltransferase RsmG family.

The protein localises to the cytoplasm. It carries out the reaction guanosine(527) in 16S rRNA + S-adenosyl-L-methionine = N(7)-methylguanosine(527) in 16S rRNA + S-adenosyl-L-homocysteine. Specifically methylates the N7 position of guanine in position 527 of 16S rRNA. This is Ribosomal RNA small subunit methyltransferase G from Helicobacter pylori (strain HPAG1).